A 158-amino-acid polypeptide reads, in one-letter code: Endoribonuclease YbeY (158 aa).

Residues His-120, His-124, and His-130 each contribute to the Zn(2+) site.

Belongs to the endoribonuclease YbeY family. Zn(2+) serves as cofactor.

The protein resides in the cytoplasm. Single strand-specific metallo-endoribonuclease involved in late-stage 70S ribosome quality control and in maturation of the 3' terminus of the 16S rRNA. The sequence is that of Endoribonuclease YbeY from Spiroplasma citri.